Consider the following 311-residue polypeptide: MKVAVLGAAGGIGQALALLLKTQLPAGSKLSLYDIAPVTPGVAVDLSHIPTAVEVKGFCGEDPTPALEGADVVLISAGVARKPGMDRSDLFNINAGIVRNLIEKVAATCPKALVGIITNPVNTTVAIAAEVLKKAGVYDKNRLFGVTTLDVIRAETFVAEAKGVDVASVKVNVIGGHSGVTILPLLSQIEGVNFSDEEVAALTKRIQNAGTEVVEAKAGGGSATLSMGQAAFRFGMSLIRGLQGEANVVECAYVDGGSEHAVFFAQPVLLGKNGVEKVLPYGEVSAFEANARDAMLDTLKGDIQLGVDFVK.

Residues 7-13 and Asp34 each bind NAD(+); that span reads GAAGGIG. Positions 81 and 87 each coordinate substrate. Residues Asn94 and 117–119 contribute to the NAD(+) site; that span reads ITN. Residues Asn119 and Arg153 each contribute to the substrate site. Residue His177 is the Proton acceptor of the active site. Residue Met227 coordinates NAD(+).

Belongs to the LDH/MDH superfamily. MDH type 1 family. Homodimer.

It catalyses the reaction (S)-malate + NAD(+) = oxaloacetate + NADH + H(+). Its function is as follows. Catalyzes the reversible oxidation of malate to oxaloacetate. In Shewanella amazonensis (strain ATCC BAA-1098 / SB2B), this protein is Malate dehydrogenase.